We begin with the raw amino-acid sequence, 258 residues long: Deoxyribose-phosphate aldolase (258 aa).

Residue aspartate 101 is the Proton donor/acceptor of the active site. The Schiff-base intermediate with acetaldehyde role is filled by lysine 166. Lysine 200 functions as the Proton donor/acceptor in the catalytic mechanism.

This sequence belongs to the DeoC/FbaB aldolase family. DeoC type 2 subfamily.

It is found in the cytoplasm. It carries out the reaction 2-deoxy-D-ribose 5-phosphate = D-glyceraldehyde 3-phosphate + acetaldehyde. It participates in carbohydrate degradation; 2-deoxy-D-ribose 1-phosphate degradation; D-glyceraldehyde 3-phosphate and acetaldehyde from 2-deoxy-alpha-D-ribose 1-phosphate: step 2/2. Catalyzes a reversible aldol reaction between acetaldehyde and D-glyceraldehyde 3-phosphate to generate 2-deoxy-D-ribose 5-phosphate. The chain is Deoxyribose-phosphate aldolase from Actinobacillus pleuropneumoniae serotype 7 (strain AP76).